An 833-amino-acid chain; its full sequence is Leucine--tRNA ligase (833 aa).

A 'HIGH' region motif is present at residues 41–52 (PYPSGAGLHVGH). The 'KMSKS' region signature appears at 610-614 (KMSKS). Lys613 provides a ligand contact to ATP.

It belongs to the class-I aminoacyl-tRNA synthetase family.

The protein resides in the cytoplasm. It carries out the reaction tRNA(Leu) + L-leucine + ATP = L-leucyl-tRNA(Leu) + AMP + diphosphate. The chain is Leucine--tRNA ligase from Streptococcus pyogenes serotype M2 (strain MGAS10270).